The primary structure comprises 428 residues: Enolase (428 aa).

Q162 contacts (2R)-2-phosphoglycerate. Catalysis depends on E204, which acts as the Proton donor. Mg(2+)-binding residues include D241, E283, and D310. Positions 335, 364, 365, and 386 each coordinate (2R)-2-phosphoglycerate. The active-site Proton acceptor is K335.

It belongs to the enolase family. Mg(2+) serves as cofactor.

It localises to the cytoplasm. The protein resides in the secreted. The protein localises to the cell surface. It catalyses the reaction (2R)-2-phosphoglycerate = phosphoenolpyruvate + H2O. Its pathway is carbohydrate degradation; glycolysis; pyruvate from D-glyceraldehyde 3-phosphate: step 4/5. Its function is as follows. Catalyzes the reversible conversion of 2-phosphoglycerate (2-PG) into phosphoenolpyruvate (PEP). It is essential for the degradation of carbohydrates via glycolysis. This is Enolase from Nocardia farcinica (strain IFM 10152).